A 132-amino-acid chain; its full sequence is Small ribosomal subunit protein uS8 (132 aa).

The protein belongs to the universal ribosomal protein uS8 family. In terms of assembly, part of the 30S ribosomal subunit. Contacts proteins S5 and S12.

One of the primary rRNA binding proteins, it binds directly to 16S rRNA central domain where it helps coordinate assembly of the platform of the 30S subunit. This chain is Small ribosomal subunit protein uS8, found in Flavobacterium psychrophilum (strain ATCC 49511 / DSM 21280 / CIP 103535 / JIP02/86).